The primary structure comprises 390 residues: Olfactomedin-like protein 3A (390 aa).

Residues 1-17 form the signal peptide; the sequence is MRALQLLVLVLSGLVGA. A coiled-coil region spans residues 18–91; the sequence is QQQALMDYLE…RVDRVEREMD (74 aa). In terms of domain architecture, Olfactomedin-like spans 130 to 386; it reads DCSDMISSIK…QILYKLQLKK (257 aa). A disulfide bridge connects residues Cys-131 and Cys-313. N-linked (GlcNAc...) asparagine glycosylation occurs at Asn-169.

This sequence belongs to the OLFML3 family.

It is found in the secreted. Secreted scaffold protein that plays an essential role in dorsoventral patterning during early development. Stabilizes axial formation by restricting chordin (CHRD) activity on the dorsal side. Acts by facilitating the association between the tolloid proteases and their substrate chordin (CHRD), leading to enhance chordin (CHRD) degradation. The chain is Olfactomedin-like protein 3A (olfml3a) from Danio rerio (Zebrafish).